We begin with the raw amino-acid sequence, 832 residues long: Protein translocase subunit SecA (832 aa).

ATP contacts are provided by residues glutamine 87, 105-109 (GEGKT), and aspartate 512.

The protein belongs to the SecA family. As to quaternary structure, monomer and homodimer. Part of the essential Sec protein translocation apparatus which comprises SecA, SecYEG and auxiliary proteins SecDF-YajC and YidC.

Its subcellular location is the cell membrane. The protein resides in the cytoplasm. It catalyses the reaction ATP + H2O + cellular proteinSide 1 = ADP + phosphate + cellular proteinSide 2.. Part of the Sec protein translocase complex. Interacts with the SecYEG preprotein conducting channel. Has a central role in coupling the hydrolysis of ATP to the transfer of proteins into and across the cell membrane, serving as an ATP-driven molecular motor driving the stepwise translocation of polypeptide chains across the membrane. The polypeptide is Protein translocase subunit SecA (Wigglesworthia glossinidia brevipalpis).